The sequence spans 406 residues: 4-hydroxy-3-methylbut-2-en-1-yl diphosphate synthase (flavodoxin) (406 aa).

4 residues coordinate [4Fe-4S] cluster: cysteine 297, cysteine 300, cysteine 343, and glutamate 350.

The protein belongs to the IspG family. As to quaternary structure, homodimer. Requires [4Fe-4S] cluster as cofactor.

The enzyme catalyses (2E)-4-hydroxy-3-methylbut-2-enyl diphosphate + oxidized [flavodoxin] + H2O + 2 H(+) = 2-C-methyl-D-erythritol 2,4-cyclic diphosphate + reduced [flavodoxin]. It participates in isoprenoid biosynthesis; isopentenyl diphosphate biosynthesis via DXP pathway; isopentenyl diphosphate from 1-deoxy-D-xylulose 5-phosphate: step 5/6. Converts 2C-methyl-D-erythritol 2,4-cyclodiphosphate (ME-2,4cPP) into 1-hydroxy-2-methyl-2-(E)-butenyl 4-diphosphate. The sequence is that of 4-hydroxy-3-methylbut-2-en-1-yl diphosphate synthase (flavodoxin) from Thermus thermophilus (strain ATCC BAA-163 / DSM 7039 / HB27).